Here is a 1395-residue protein sequence, read N- to C-terminus: MATQVLIAHSGQRLQIDTSRLTTLDEFRSAVSRSTSIPQNCIIALVPPGKALRPQAIQMEKEIFVYDSRMTQTGAPGSPFPVKLEIDLPKPYAITNPPNDIIDTRSLESWQDLFRERRVWAHRLSEDCEGMEKEAHDQYEAMDNMLSCLDAAVANLESVVRATENKYEDLKKWAATEQTGYNDLVTRWEQNLGLARSIPISAAMVRLMTGKDVTGAKGRPSKQATLEDLVDLDCARKEGRRAPTVLRKFNARIADLEKAEGRLMQNFEELEAEFRRVISRSVMGHSQDATQLLQDIQALAGKVENDYRTTMDYSTSTRDLLQASKIAQTHTEKHLPSLHKRALEMDGMLRYAIKARNALALEQAEFMRSIADVSKLDMQVKSLINAIAEDEELATFDYLRLIHQVPYMYAAFTAEAIRRKEWFDKVKTDSTTLANEMALFQDEEAKRRRKWYKTIGDTSYGPESLSTDNNVPGLEVNLLGEDELWPSTSRKDLEEFLDLLQRQRADASIIGDVGKIIAELSNPTKQQFKRLKAFKNGSVHDSALGRSGLMIRGDDELLRSLQDDKTKLETKLRTAESRVRRLEDLLHRQGQASRPTLGNLFQNPSQQLPERSGSAQSVGSPGPIGDRRQSDEVGNQLVQRVAQLEKELQEEKERNAALERDAADRTTHTNDIKAQMDDVNATKKDLLENMEAQKREFLVERKALDEEIRNLKARLEETEDEFHNIDESREHEKTSYDEKVQLLEAQLESLTKEKSDDALKAQGQVDFLRNETRLQRESNEALQAQIQASQDELGLLNKKLKTTNEAADVQLRALRELYTTFVKSAGIPEDVNDLADTVLNNAAETLAKVQNLDADISIMRSNLALAQDVAKDLRAQQANALEKLAKEETTSMHLREQCDEHKAKVNALEGELADGRKQLDELRTQIAQGETGSESLRTRLEEEEKKIVRLTEDLASKQSQVGSLEEELRLFQERLQDSQSKLTTLTLRTETRNERTKDISQRLYSQNERLVRLLERLGFSVSRENGVMTIQKIPRAERSTMNLAASSTADAKSRIASEPADVELLYWMNATDVQGETEKYDKFMSTLGSFDVDAFADTVYRRVKDVEHIARKLQRDVRGYREKTHALHKDAHDKIAFRNFKEGDLALFLPTRNQTNGAWAAFNIGFPHYFLREQEHHRLSNREWLVARITRVQEKVVDLSKSLDTTESINGTSGGAEDDNDNPFDLSDGLRWYLIDAQEDKPGAPSTPGLGKTTVASTKVEAKGDMQTQPRSTPGGLAVLGGAKPSAVDGASKSLSKSLESRRSSTSSTRRPLPFAGALSRNAPGSETNSLRAVATTAPGDGAGSPSGPTSPKPHLAHGEDQDVRLAALPEPQQQRVEVRNDSGGGAIDSLLGPT.

Coiled coils occupy residues Arg-123–Lys-172, Leu-246–Val-277, Asp-555–Gln-591, Gln-629–Tyr-818, and Asn-862–Thr-986. Disordered regions lie at residues Leu-586 to Glu-632 and Glu-647 to Lys-673. Residues Gly-590–Gly-619 are compositionally biased toward polar residues. A disordered region spans residues Val-1260–Thr-1395. 2 stretches are compositionally biased toward low complexity: residues Ser-1292–Arg-1311 and Thr-1337–Thr-1350.

Belongs to the ATG11 family. In terms of assembly, homodimer.

The protein resides in the preautophagosomal structure membrane. It is found in the vacuole membrane. Involved in cytoplasm to vacuole transport (Cvt), pexophagy, mitophagy and nucleophagy. Recruits mitochondria for their selective degradation via autophagy (mitophagy) during starvation. Works as scaffold proteins that recruit ATG proteins to the pre-autophagosome (PAS), the site of vesicle/autophagosome formation. Required for the Cvt vesicles completion. This chain is Autophagy-related protein 11 (ATG11), found in Pyricularia oryzae (strain 70-15 / ATCC MYA-4617 / FGSC 8958) (Rice blast fungus).